The following is a 151-amino-acid chain: Globin CTT-VIII (151 aa).

The region spanning 4-148 (PMSADQLALF…MFFYILHALE (145 aa)) is the Globin domain. Residues H62 and H97 each coordinate heme b.

The protein belongs to the globin family. As to quaternary structure, homodimer.

The chain is Globin CTT-VIII (CTT-8) from Chironomus thummi thummi (Midge).